The sequence spans 39 residues: LIM/homeobox protein xLIM-2B (39 aa).

The segment at residues 1-39 is a DNA-binding region (homeobox); the sequence is KAKQLETLKAAFAATPKPTRHIREQLAQETGLNMRVIQV.

The protein resides in the nucleus. This Xenopus laevis (African clawed frog) protein is LIM/homeobox protein xLIM-2B (lim2b).